The primary structure comprises 370 residues: Gibberellin 3-beta-dioxygenase 2-2 (370 aa).

Residues 205-306 form the Fe2OG dioxygenase domain; that stretch reads MTATMHLNWY…RISLGYFLGP (102 aa). Histidine 229, aspartate 231, and histidine 287 together coordinate Fe cation. The active site involves arginine 297.

Belongs to the iron/ascorbate-dependent oxidoreductase family. GA3OX subfamily. It depends on L-ascorbate as a cofactor. Fe cation is required as a cofactor.

The enzyme catalyses gibberellin A20 + 2-oxoglutarate + O2 = gibberellin A1 + succinate + CO2. In terms of biological role, converts the inactive gibberellin precursors GA9 and GA20 in the bioactives gibberellins GA4 and GA1. This is Gibberellin 3-beta-dioxygenase 2-2 (GA3ox2-2) from Triticum aestivum (Wheat).